We begin with the raw amino-acid sequence, 319 residues long: tRNA uridine(34) hydroxylase (319 aa).

In terms of domain architecture, Rhodanese spans 127–221; it reads KQEDTVIIDA…YGKDPEVQGE (95 aa). Cys181 acts as the Cysteine persulfide intermediate in catalysis.

This sequence belongs to the TrhO family.

It catalyses the reaction uridine(34) in tRNA + AH2 + O2 = 5-hydroxyuridine(34) in tRNA + A + H2O. Its function is as follows. Catalyzes oxygen-dependent 5-hydroxyuridine (ho5U) modification at position 34 in tRNAs. The sequence is that of tRNA uridine(34) hydroxylase from Bacillus cereus (strain Q1).